Reading from the N-terminus, the 394-residue chain is MIEKIQKFLKLEAAGGILLLIAALLAMLCANSVFSPYYFEFLQTQVAVKLGAFSIDKPLLMWINDGFMAVFFILVGMEVKRELLEGSLSSYQKAIFPAFAAIGGMVVPALIYWFINRDYPEYQQGWAIPMATDIAFALGIVALLSKQVPATLKVFLLALAIIDDIGAIIVIALFFSNELSMLALIIASIAIMILITMNRYKVTGIIHYVIVGTILWASVLKSGVHATLAGVIIGFCIPLRGKKGETPLHDLEHTLAPWCAFAILPLFAFSNAGVSLAGMSLAKLTSPLPLGITLGLLIGKPVGVFSFCYLAVRAGLAKLPEGINFKQVFAIAVLCGIGFTMSVFIAGLSFGEEHPDETILALSRLGILIGTSIAAIVGYILLKKTTNKPLVQAG.

11 helical membrane passes run 14-34, 59-79, 95-115, 125-145, 155-175, 177-197, 204-224, 258-278, 292-312, 328-348, and 362-382; these read AGGI…NSVF, LLMW…GMEV, IFPA…YWFI, GWAI…ALLS, FLLA…ALFF, NELS…LITM, GIIH…KSGV, WCAF…SLAG, ITLG…YLAV, VFAI…IAGL, and LSRL…YILL.

The protein belongs to the NhaA Na(+)/H(+) (TC 2.A.33) antiporter family.

It localises to the cell inner membrane. It carries out the reaction Na(+)(in) + 2 H(+)(out) = Na(+)(out) + 2 H(+)(in). Its function is as follows. Na(+)/H(+) antiporter that extrudes sodium in exchange for external protons. This Haemophilus ducreyi (strain 35000HP / ATCC 700724) protein is Na(+)/H(+) antiporter NhaA.